Reading from the N-terminus, the 869-residue chain is NACHT, LRR and PYD domains-containing protein 6 (869 aa).

The Pyrin domain occupies 37–128 (KLRDAPLDGR…REHVLRQHAK (92 aa)). Residues 194–511 (LTVVLQGPAG…EFLAALSYLL (318 aa)) form the NACHT domain. 200–207 (GPAGIGKT) provides a ligand contact to ATP. The segment at 350-354 (KDKKK) is disordered. One copy of the LRR 1 repeat lies at 460 to 485 (EEDLEKLKLRGSQVQTIFLNKKEIPG). The segment at 577 to 608 (VQGQSHPKGPPVGAKKTAELEDIEDAEEEEEE) is disordered. Acidic residues predominate over residues 596–608 (LEDIEDAEEEEEE). LRR repeat units lie at residues 635–658 (LSSL…VLNY) and 837–860 (TLSL…KTSK).

Belongs to the NLRP family. In terms of assembly, homomultimer; forms the NLRP6 inflammasome polymeric complex, a filament composed of homopolymers in response to pathogens and other damage-associated signals. The core of NLRP6 inflammasomes consists of a signal sensor component (NLRP6), an adapter (PYCARD/ASC), which recruits effector pro-inflammatory caspases (CASP1 and CASP4). Interacts (via pyrin domain) with PYCARD/ASC (via pyrin domain); interaction takes place following NLRP6 activation and formation of liquid-liquid phase separation (LLPS), initiating nucleation which greatly enhances further addition of soluble PYCARD/ASC molecules to the speck in a prion-like polymerization process. Clustered PYCARD/ASC nucleates the formation of CASP1 (or possibly CASP4) filaments through the interaction of their respective CARD domains, acting as a platform for CASP1 polymerization. CASP1 filament formation increases local enzyme concentration, resulting in trans-autocleavage and activation. Active CASP1 then processes IL1B and IL18 precursors, leading to the release of mature cytokines in the extracellular milieu and inflammatory response. Interacts with DHX15. Polyubiquitinated with 'Lys-63'-linked chains, promoting the interaction with PYCARD/ASC and formation of the NLRP6 inflammasome. Deubiquitination by CYLD decreases the interaction with PYCARD/ASC. In terms of tissue distribution, highly expressed in the gastrointestinal tract, predominantly in colonic myofibroblasts and in colonic epithelial and endothelial cells. Within the intestinal mucosa, highly expressed by goblet cells. Also expressed in hepatocytes and in immune cells, including CD4(+) and CD8(+) T-cells, dendritic cells, mastocytes and peritoneal macrophages, as well as in lung, kidney, bladder and gonads.

The protein resides in the cytoplasm. Its subcellular location is the inflammasome. The protein localises to the cell membrane. It localises to the nucleus membrane. Its function is as follows. Acts as the sensor component of the NLRP6 inflammasome, which mediates inflammasome activation in response to various pathogen-associated signals, leading to maturation and secretion of IL1B and IL18. Inflammasomes are supramolecular complexes that assemble in the cytosol in response to pathogens and other damage-associated signals and play critical roles in innate immunity and inflammation. Acts as a recognition receptor (PRR): recognizes and binds specific pathogens and other damage-associated signals, such as lipoteichoic acid (LTA), a cell-wall component of Gram-positive bacteria, or double stranded RNA (dsRNA). May also recognize and bind lipopolysaccharide (LPS), a major component of the outer membrane of Gram-negative bacteria; however, LPS is probably not a major activator of the NLRP6 inflammasome. Following LTA- or dsRNA-binding, NLRP6 undergoes liquid-liquid phase separation (LLPS), enhancing multivalent interactions, an essential step for the formation of the NLRP6 inflammasome polymeric complex. The NLRP6 inflammasome acts by promoting recruitment of effector pro-inflammatory caspases (CASP1 and/or CASP4) that catalyze maturation and secretion of IL1B and IL18 in the extracellular milieu. The NLRP6 inflammasome plays a central role in the maintenance of epithelial integrity and host defense against microbial infections in the intestine. Required to restrict infection against Gram-positive bacteria by recognizing lipoteichoic acid (LTA), leading to recruitment of CASP4 and CASP1, and subsequent maturation and secretion of IL1B and IL18. Involved in intestinal antiviral innate immunity together with DHX15: recognizes and binds viral dsRNA to restrict infection by enteric viruses through the interferon pathway and GSDMD-dependent release of IL18. Required to prevent infection by the apicomplexan parasite C.tyzzeri in enterocytes by promoting GSDMD-dependent release of IL18. The NLRP6 inflammasome may also regulate the gut microbiota composition by acting as a sensor of microbiota-associated metabolites to form a PYCARD/ASC-dependent inflammasome for downstream IL18 release and secretion of antimicrobial peptides. Its role in the regulation of the gut microbiota composition is however subject to discussion. Essential for gut mucosal self-renewal and proliferation. Regulate mucus secretion in an inflammasome- and autophagy-dependent manner to prevent invasion by enteric bacteria. During systemic bacterial infections, the NLRP6 inflammasome negatively regulates neutrophil recruitment and neutrophil extracellular traps (NETs) formation. May promote peripheral nerve recovery following injury via an inflammasome-independent mechanism. In Mus musculus (Mouse), this protein is NACHT, LRR and PYD domains-containing protein 6.